A 208-amino-acid chain; its full sequence is Proheparin-binding EGF-like growth factor (208 aa).

The first 19 residues, 1 to 19 (MKLLPSVVLKLFLAAVLSA), serve as a signal peptide directing secretion. The propeptide at 20-62 (LVTGESLERLRRGLAAGTSNPDPPTVSTDQLLPLGGGRDRKVR) is or 72, or 73, or 76, or 81. The Extracellular segment spans residues 20 to 160 (LVTGESLERL…ENRLYTYDHT (141 aa)). Residues 33–56 (LAAGTSNPDPPTVSTDQLLPLGGG) form a disordered region. Residues 36 to 49 (GTSNPDPPTVSTDQ) are compositionally biased toward polar residues. T37 is a glycosylation site (O-linked (GalNAc...) threonine). S38 carries an O-linked (GalNAc...) serine glycan. Residues T44, T47, T75, and T85 are each glycosylated (O-linked (GalNAc...) threonine). The interval 82–104 (ALATPNKEEHGKRKKKGKGLGKK) is disordered. The span at 93-102 (KRKKKGKGLG) shows a compositional bias: basic residues. An EGF-like domain is found at 104-144 (KRDPCLRKYKDFCIHGECKYVKELRAPSCICHPGYHGERCH). 3 disulfides stabilise this stretch: C108/C121, C116/C132, and C134/C143. Positions 149 to 208 (PVENRLYTYDHTTILAVVAVVLSSVCLLVIVGLLMFRYHRRGGYDVENEEKVKLGMTNSH) are cleaved as a propeptide — C-terminal. The helical transmembrane segment at 161-184 (TILAVVAVVLSSVCLLVIVGLLMF) threads the bilayer. Over 185–208 (RYHRRGGYDVENEEKVKLGMTNSH) the chain is Cytoplasmic.

As to quaternary structure, interacts with FBLN1. Interacts with EGFR and ERBB4. Several N-termini have been identified by direct sequencing. The forms with N-termini 63, 73 and 74 have been tested and found to be biologically active. In terms of processing, O-glycosylated with core 1 or possibly core 8 glycans. Thr-47 is a minor glycosylation site compared to Thr-44.

The protein localises to the secreted. The protein resides in the extracellular space. It is found in the cell membrane. Growth factor that mediates its effects via EGFR, ERBB2 and ERBB4. Required for normal cardiac valve formation and normal heart function. Promotes smooth muscle cell proliferation. May be involved in macrophage-mediated cellular proliferation. It is mitogenic for fibroblasts, but not endothelial cells. It is able to bind EGF receptor/EGFR with higher affinity than EGF itself and is a far more potent mitogen for smooth muscle cells than EGF. Also acts as a diphtheria toxin receptor. This is Proheparin-binding EGF-like growth factor (HBEGF) from Homo sapiens (Human).